Here is a 323-residue protein sequence, read N- to C-terminus: Sphingolipid delta(4)-desaturase/C4-monooxygenase DES2 (323 aa).

G2 is lipidated: N-myristoyl glycine. 2 consecutive transmembrane segments (helical) span residues 45 to 65 (WAVL…RGLA) and 68 to 88 (WLLF…TLAI). A Histidine box-1 motif is present at residues 89–93 (HDISH). Residues 95-99 (AAFGT) form a required for C4-hydroxylase activity region. Positions 128-132 (HVDHH) match the Histidine box-2 motif. A helical membrane pass occupies residues 210–231 (VYLLASSFLGLGLHPISGHFVA). Residues 259–263 (HVEHH) carry the Histidine box-3 motif.

It belongs to the fatty acid desaturase type 1 family. DEGS subfamily. In terms of tissue distribution, highly expressed in skin, intestine and kidney.

Its subcellular location is the endoplasmic reticulum membrane. It carries out the reaction a dihydroceramide + 2 Fe(II)-[cytochrome b5] + O2 + 2 H(+) = a phytoceramide + 2 Fe(III)-[cytochrome b5] + H2O. The catalysed reaction is an N-acylsphinganine + 2 Fe(II)-[cytochrome b5] + O2 + 2 H(+) = an N-acylsphing-4-enine + 2 Fe(III)-[cytochrome b5] + 2 H2O. The enzyme catalyses N-octanoylsphinganine + 2 Fe(II)-[cytochrome b5] + O2 + 2 H(+) = N-octanoyl-4-hydroxysphinganine + 2 Fe(III)-[cytochrome b5] + H2O. It catalyses the reaction an N-acylsphinganine + 2 Fe(II)-[cytochrome b5] + O2 + 2 H(+) = an N-acyl-(4R)-4-hydroxysphinganine + 2 Fe(III)-[cytochrome b5] + H2O. It participates in membrane lipid metabolism; sphingolipid biosynthesis. Its function is as follows. Bifunctional enzyme which acts both as a sphingolipid delta(4)-desaturase and a sphingolipid C4-monooxygenase. This is Sphingolipid delta(4)-desaturase/C4-monooxygenase DES2 from Homo sapiens (Human).